The primary structure comprises 151 residues: Small ribosomal subunit protein eS6 (151 aa).

The protein belongs to the eukaryotic ribosomal protein eS6 family.

The sequence is that of Small ribosomal subunit protein eS6 from Pyrobaculum calidifontis (strain DSM 21063 / JCM 11548 / VA1).